The primary structure comprises 196 residues: tRNA(Phe) 7-((3-amino-3-carboxypropyl)-4-demethylwyosine(37)-N(4))-methyltransferase 1 (196 aa).

The protein belongs to the TYW3 family.

It carries out the reaction 4-demethyl-7-[(3S)-3-amino-3-carboxypropyl]wyosine(37) in tRNA(Phe) + S-adenosyl-L-methionine = 7-[(3S)-3-amino-3-carboxypropyl]wyosine(37) in tRNA(Phe) + S-adenosyl-L-homocysteine + H(+). Its function is as follows. S-adenosyl-L-methionine-dependent methyltransferase that acts as a component of the wyosine derivatives biosynthesis pathway. Probably methylates N-4 position of wybutosine-86 to produce wybutosine-72. In Pyrococcus furiosus (strain ATCC 43587 / DSM 3638 / JCM 8422 / Vc1), this protein is tRNA(Phe) 7-((3-amino-3-carboxypropyl)-4-demethylwyosine(37)-N(4))-methyltransferase 1.